The chain runs to 332 residues: Cell growth regulator with RING finger domain protein 1 (332 aa).

The RING-type zinc finger occupies 274–309 (CVVCQNGGVNWVLLPCRHACLCDSCVCYFKQCPMCR).

As to expression, highly expressed in testis, lower levels of expression is seen in skeletal muscle, liver, lung and brain.

The protein resides in the nucleus. It is found in the endoplasmic reticulum. Functionally, able to inhibit growth in several cell lines. In Rattus norvegicus (Rat), this protein is Cell growth regulator with RING finger domain protein 1 (Cgrrf1).